A 2037-amino-acid polypeptide reads, in one-letter code: Fatty acid synthase subunit beta (2037 aa).

The segment at methionine 1–phenylalanine 453 is acetyltransferase. The active-site For acetyltransferase activity is serine 261. Residues valine 465–serine 798 form an enoyl reductase region. The interval glycine 1132–methionine 1612 is dehydratase. One can recognise a MaoC-like domain in the interval asparagine 1506–glutamate 1634. The interval glutamate 1613–aspartate 1833 is malonyl/palmitoyl transferase. The active-site For malonyltransferase activity is the serine 1796.

The protein belongs to the fungal fatty acid synthetase subunit beta family. [Alpha(6)beta(6)] hexamers of two multifunctional subunits (alpha and beta).

The enzyme catalyses acetyl-CoA + n malonyl-CoA + 2n NADPH + 4n H(+) = a long-chain-acyl-CoA + n CoA + n CO2 + 2n NADP(+).. It catalyses the reaction holo-[ACP] + acetyl-CoA = acetyl-[ACP] + CoA. It carries out the reaction holo-[ACP] + malonyl-CoA = malonyl-[ACP] + CoA. The catalysed reaction is a (3R)-hydroxyacyl-[ACP] = a (2E)-enoyl-[ACP] + H2O. The enzyme catalyses a 2,3-saturated acyl-[ACP] + NAD(+) = a (2E)-enoyl-[ACP] + NADH + H(+). It catalyses the reaction (9Z)-octadecenoyl-[ACP] + H2O = (9Z)-octadecenoate + holo-[ACP] + H(+). Fatty acid synthetase catalyzes the formation of long-chain fatty acids from acetyl-CoA, malonyl-CoA and NADPH. The beta subunit contains domains for: [acyl-carrier-protein] acetyltransferase and malonyltransferase, S-acyl fatty acid synthase thioesterase, enoyl-[acyl-carrier-protein] reductase, and 3-hydroxypalmitoyl-[acyl-carrier-protein] dehydratase. The chain is Fatty acid synthase subunit beta (FAS1) from Candida albicans (Yeast).